The chain runs to 151 residues: Cytochrome c-type biogenesis protein CcmE (151 aa).

The Cytoplasmic segment spans residues 1-8 (MNPLRRKR). A helical; Signal-anchor for type II membrane protein transmembrane segment spans residues 9–29 (LLIILAILVGVGVAVGLALSA). Topologically, residues 30–151 (LQQNINLFYT…QSAPTPAKEG (122 aa)) are periplasmic. Heme contacts are provided by H124 and Y128.

Belongs to the CcmE/CycJ family.

It localises to the cell inner membrane. In terms of biological role, heme chaperone required for the biogenesis of c-type cytochromes. Transiently binds heme delivered by CcmC and transfers the heme to apo-cytochromes in a process facilitated by CcmF and CcmH. The protein is Cytochrome c-type biogenesis protein CcmE of Pseudomonas fluorescens biotype C.